The chain runs to 488 residues: Glutamate--tRNA ligase (488 aa).

The 'HIGH' region motif lies at 9–19 (PSPTGFLHIGG). Zn(2+)-binding residues include Cys112, Cys114, Cys139, and His141. The 'KMSKS' region motif lies at 256 to 260 (KLSKR). ATP is bound at residue Lys259.

This sequence belongs to the class-I aminoacyl-tRNA synthetase family. Glutamate--tRNA ligase type 1 subfamily. Monomer. Zn(2+) serves as cofactor.

The protein localises to the cytoplasm. The catalysed reaction is tRNA(Glu) + L-glutamate + ATP = L-glutamyl-tRNA(Glu) + AMP + diphosphate. Catalyzes the attachment of glutamate to tRNA(Glu) in a two-step reaction: glutamate is first activated by ATP to form Glu-AMP and then transferred to the acceptor end of tRNA(Glu). The protein is Glutamate--tRNA ligase of Elusimicrobium minutum (strain Pei191).